Here is a 346-residue protein sequence, read N- to C-terminus: Phosphate-binding protein PstS (346 aa).

The signal sequence occupies residues 1 to 25 (MKVMRTTVATVVAATLSMSAFSVFA). Phosphate is bound by residues 34–36 (ATF), S63, D81, and 164–166 (SGT).

Belongs to the PstS family. As to quaternary structure, the complex is composed of two ATP-binding proteins (PstB), two transmembrane proteins (PstC and PstA) and a solute-binding protein (PstS).

Its subcellular location is the periplasm. Its function is as follows. Part of the ABC transporter complex PstSACB involved in phosphate import. This is Phosphate-binding protein PstS (pstS) from Escherichia coli (strain K12).